Here is a 186-residue protein sequence, read N- to C-terminus: Oligoribonuclease (186 aa).

Positions 12–175 (LIWIDLEMTG…DDIKDSIKEL (164 aa)) constitute an Exonuclease domain. Residue Tyr133 is part of the active site.

This sequence belongs to the oligoribonuclease family.

It is found in the cytoplasm. Functionally, 3'-to-5' exoribonuclease specific for small oligoribonucleotides. This chain is Oligoribonuclease, found in Wigglesworthia glossinidia brevipalpis.